Here is a 135-residue protein sequence, read N- to C-terminus: Large ribosomal subunit protein mL41A (135 aa).

The transit peptide at 1 to 13 (MGLISKIARGLVR) directs the protein to the mitochondrion.

It belongs to the mitochondrion-specific ribosomal protein mL41 family. In terms of assembly, component of the mitochondrial ribosome large subunit (39S) which comprises a 16S rRNA and about 50 distinct proteins.

The protein resides in the mitochondrion. In terms of biological role, component of the mitochondrial ribosome large subunit. Also involved in apoptosis and cell cycle. This chain is Large ribosomal subunit protein mL41A (mrpl41-a), found in Xenopus laevis (African clawed frog).